Reading from the N-terminus, the 285-residue chain is Bifunctional protein FolD (285 aa).

Residues 166–168 (GAS) and I232 each bind NADP(+).

Belongs to the tetrahydrofolate dehydrogenase/cyclohydrolase family. As to quaternary structure, homodimer.

The catalysed reaction is (6R)-5,10-methylene-5,6,7,8-tetrahydrofolate + NADP(+) = (6R)-5,10-methenyltetrahydrofolate + NADPH. The enzyme catalyses (6R)-5,10-methenyltetrahydrofolate + H2O = (6R)-10-formyltetrahydrofolate + H(+). It participates in one-carbon metabolism; tetrahydrofolate interconversion. Catalyzes the oxidation of 5,10-methylenetetrahydrofolate to 5,10-methenyltetrahydrofolate and then the hydrolysis of 5,10-methenyltetrahydrofolate to 10-formyltetrahydrofolate. This chain is Bifunctional protein FolD, found in Vibrio vulnificus (strain CMCP6).